The chain runs to 526 residues: MSGNKVEVDKRRTFAIISHPDAGKTTITEKVLLFGNALQKAGTVKGKKSGQHAKSDWMEMEKDRGISITTSVMQFPYHDALVNLLDTPGHEDFSEDTYRTLTAVDSCLMVIDSAKGVEQRTIKLMEVTRLRDTPIVTFMNKLDRDIRDPIELMDEVEEVLNIKCAPITWPIGCGKEFKGVYHLLRDEVILYQGGMGHTIQDSRVIKGLDNPELDDAIGSYAADIRDEMELVVGASHEFDLELFLKGELTPVYFGTALGNFGVDHILDGIVEWAPIPQPRETETRDVQPEEEKFSGFVFKIQANMDPKHRDRVAFMRVCSGRYEQGMKMHHVRLGKDVNVSDALTFMAGDRNRAEAAYPGDIIGLHNHGTIRIGDTFTQGEKLRFTGVPNFAPEMFRRIRLRDPLKQKQLLKGLVQLSEEGAVQVFRPLDSNDLIVGAVGVLQFEVVVGRLKTEYKVEAIYEAISVATARWVYCNDHKKLDEFKRKCSMNLALDGGDNLTYIAPTMVNLNLSMERYPDIEFAKTREN.

The tr-type G domain maps to 9–277 (DKRRTFAIIS…GIVEWAPIPQ (269 aa)). GTP contacts are provided by residues 18–25 (SHPDAGKT), 86–90 (DTPGH), and 140–143 (NKLD).

It belongs to the TRAFAC class translation factor GTPase superfamily. Classic translation factor GTPase family. PrfC subfamily.

The protein resides in the cytoplasm. Functionally, increases the formation of ribosomal termination complexes and stimulates activities of RF-1 and RF-2. It binds guanine nucleotides and has strong preference for UGA stop codons. It may interact directly with the ribosome. The stimulation of RF-1 and RF-2 is significantly reduced by GTP and GDP, but not by GMP. The chain is Peptide chain release factor 3 from Shewanella halifaxensis (strain HAW-EB4).